The primary structure comprises 420 residues: Adenylosuccinate synthetase (420 aa).

GTP-binding positions include 12-18 (GDEGKGK) and 40-42 (GHT). Aspartate 13 (proton acceptor) is an active-site residue. Mg(2+) contacts are provided by aspartate 13 and glycine 40. IMP contacts are provided by residues 13-16 (DEGK), 38-41 (NAGH), threonine 128, arginine 142, glutamine 221, threonine 236, and arginine 299. The Proton donor role is filled by histidine 41. 295 to 301 (ATTGRPR) is a binding site for substrate. GTP-binding positions include arginine 301, 327–329 (KAD), and 399–401 (SYG).

The protein belongs to the adenylosuccinate synthetase family. In terms of assembly, homodimer. The cofactor is Mg(2+).

The protein resides in the cytoplasm. It carries out the reaction IMP + L-aspartate + GTP = N(6)-(1,2-dicarboxyethyl)-AMP + GDP + phosphate + 2 H(+). It functions in the pathway purine metabolism; AMP biosynthesis via de novo pathway; AMP from IMP: step 1/2. In terms of biological role, plays an important role in the de novo pathway of purine nucleotide biosynthesis. Catalyzes the first committed step in the biosynthesis of AMP from IMP. The protein is Adenylosuccinate synthetase of Petrotoga mobilis (strain DSM 10674 / SJ95).